A 97-amino-acid polypeptide reads, in one-letter code: Integration host factor subunit alpha (97 aa).

The protein belongs to the bacterial histone-like protein family. In terms of assembly, heterodimer of an alpha and a beta chain.

Functionally, this protein is one of the two subunits of integration host factor, a specific DNA-binding protein that functions in genetic recombination as well as in transcriptional and translational control. The chain is Integration host factor subunit alpha from Hydrogenovibrio crunogenus (strain DSM 25203 / XCL-2) (Thiomicrospira crunogena).